A 423-amino-acid chain; its full sequence is Gamma-glutamyl phosphate reductase (423 aa).

The protein belongs to the gamma-glutamyl phosphate reductase family.

It localises to the cytoplasm. The enzyme catalyses L-glutamate 5-semialdehyde + phosphate + NADP(+) = L-glutamyl 5-phosphate + NADPH + H(+). Its pathway is amino-acid biosynthesis; L-proline biosynthesis; L-glutamate 5-semialdehyde from L-glutamate: step 2/2. Catalyzes the NADPH-dependent reduction of L-glutamate 5-phosphate into L-glutamate 5-semialdehyde and phosphate. The product spontaneously undergoes cyclization to form 1-pyrroline-5-carboxylate. The protein is Gamma-glutamyl phosphate reductase of Pseudomonas putida (strain GB-1).